The chain runs to 319 residues: ATP-dependent 6-phosphofructokinase (319 aa).

G11 contributes to the ATP binding site. 21–25 (RAVVR) provides a ligand contact to ADP. Residues 72-73 (RY) and 102-105 (GDGS) contribute to the ATP site. D103 is a binding site for Mg(2+). 125–127 (TID) lines the substrate pocket. D127 (proton acceptor) is an active-site residue. R154 contacts ADP. Substrate contacts are provided by residues R162 and 169-171 (MGR). Residues 185 to 187 (GAE), R211, and 213 to 215 (KKH) each bind ADP. Residues E222, R243, and 249–252 (HVQR) each bind substrate.

Belongs to the phosphofructokinase type A (PFKA) family. ATP-dependent PFK group I subfamily. Prokaryotic clade 'B1' sub-subfamily. As to quaternary structure, homotetramer. The cofactor is Mg(2+).

The protein resides in the cytoplasm. The catalysed reaction is beta-D-fructose 6-phosphate + ATP = beta-D-fructose 1,6-bisphosphate + ADP + H(+). Its pathway is carbohydrate degradation; glycolysis; D-glyceraldehyde 3-phosphate and glycerone phosphate from D-glucose: step 3/4. Allosterically activated by ADP and other diphosphonucleosides, and allosterically inhibited by phosphoenolpyruvate. In terms of biological role, catalyzes the phosphorylation of D-fructose 6-phosphate to fructose 1,6-bisphosphate by ATP, the first committing step of glycolysis. The chain is ATP-dependent 6-phosphofructokinase from Listeria welshimeri serovar 6b (strain ATCC 35897 / DSM 20650 / CCUG 15529 / CIP 8149 / NCTC 11857 / SLCC 5334 / V8).